Here is a 137-residue protein sequence, read N- to C-terminus: MEAVLTKLDQEEKRALQDFHRCAWEETKNVINDFLEIPEERCTYKFNPYTKKMELLFTPEFHTAWQEVPECREFILNFLRLISGHRVVLKGPTIVFTKEIKNLGIPSTINVDFQANIENMDDLQKGNLIGKMNIKES.

This sequence belongs to the asfivirus A137R family. In terms of assembly, interacts with host TBK1.

The protein localises to the virion. It is found in the host cytoplasm. Functionally, plays a role in the inhibition of the host innate immune response. Mechanistically, promotes the autophagy-mediated lysosomal degradation of host TBK1 and affects IRF3 nuclear translocation to block type I IFN production. The polypeptide is Structural protein A137R (Ornithodoros (relapsing fever ticks)).